The primary structure comprises 185 residues: Large ribosomal subunit protein bL25 (185 aa).

This sequence belongs to the bacterial ribosomal protein bL25 family. CTC subfamily. Part of the 50S ribosomal subunit; part of the 5S rRNA/L5/L18/L25 subcomplex. Contacts the 5S rRNA. Binds to the 5S rRNA independently of L5 and L18.

In terms of biological role, this is one of the proteins that binds to the 5S RNA in the ribosome where it forms part of the central protuberance. The protein is Large ribosomal subunit protein bL25 of Microcystis aeruginosa (strain NIES-843 / IAM M-2473).